We begin with the raw amino-acid sequence, 216 residues long: Imidazole glycerol phosphate synthase subunit HisH (216 aa).

Residues 2–216 form the Glutamine amidotransferase type-1 domain; that stretch reads RVAIIDYGSG…LISNFLRWKP (215 aa). The Nucleophile role is filled by Cys88. Catalysis depends on residues His196 and Glu198.

As to quaternary structure, heterodimer of HisH and HisF.

The protein resides in the cytoplasm. It catalyses the reaction 5-[(5-phospho-1-deoxy-D-ribulos-1-ylimino)methylamino]-1-(5-phospho-beta-D-ribosyl)imidazole-4-carboxamide + L-glutamine = D-erythro-1-(imidazol-4-yl)glycerol 3-phosphate + 5-amino-1-(5-phospho-beta-D-ribosyl)imidazole-4-carboxamide + L-glutamate + H(+). The enzyme catalyses L-glutamine + H2O = L-glutamate + NH4(+). It functions in the pathway amino-acid biosynthesis; L-histidine biosynthesis; L-histidine from 5-phospho-alpha-D-ribose 1-diphosphate: step 5/9. IGPS catalyzes the conversion of PRFAR and glutamine to IGP, AICAR and glutamate. The HisH subunit catalyzes the hydrolysis of glutamine to glutamate and ammonia as part of the synthesis of IGP and AICAR. The resulting ammonia molecule is channeled to the active site of HisF. The chain is Imidazole glycerol phosphate synthase subunit HisH from Rhizobium meliloti (strain 1021) (Ensifer meliloti).